The sequence spans 326 residues: Probable GTP 3',8-cyclase (326 aa).

The Radical SAM core domain occupies 6-235 (LYGRPVLSLR…NRPRYIIRTQ (230 aa)). Arg-15 contributes to the GTP binding site. [4Fe-4S] cluster is bound by residues Cys-22, Cys-26, and Cys-29. Lys-62 contributes to the GTP binding site. Residue Gly-66 participates in S-adenosyl-L-methionine binding. Residue Thr-92 participates in GTP binding. Ser-116 serves as a coordination point for S-adenosyl-L-methionine. Residue Lys-153 coordinates GTP. Cys-253 and Cys-256 together coordinate [4Fe-4S] cluster. 258–260 (RLR) contributes to the GTP binding site. Cys-270 is a [4Fe-4S] cluster binding site.

The protein belongs to the radical SAM superfamily. MoaA family. [4Fe-4S] cluster is required as a cofactor.

It carries out the reaction GTP + AH2 + S-adenosyl-L-methionine = (8S)-3',8-cyclo-7,8-dihydroguanosine 5'-triphosphate + 5'-deoxyadenosine + L-methionine + A + H(+). The protein operates within cofactor biosynthesis; molybdopterin biosynthesis. Its function is as follows. Catalyzes the cyclization of GTP to (8S)-3',8-cyclo-7,8-dihydroguanosine 5'-triphosphate. The protein is Probable GTP 3',8-cyclase of Thermoplasma volcanium (strain ATCC 51530 / DSM 4299 / JCM 9571 / NBRC 15438 / GSS1).